The primary structure comprises 378 residues: MSQALDYAKRLIAAPSVTPATGAVFDEMQAMLEPLGFAVHRFTRGEGEEGSDEAPVENLFAIRHGPEGSKHFAFAGHLDVVPPGEGWTSAPFEPEERGELLYGRGAVDMKGAIACMVDAVANVPQEAGTISFIITGDEEGPALHGTRALIDYMRSEGIKPDLCLVGEPTSVNRLGDMMKIGRRGSVNIWLEVEGTQGHVAYPHLAGNPLPAMVEILRELNNLPLDEGTDWFQPSNLEITEIDVPNRAHNVIPAKAKARISIRFNDTHSGASLSKQVIEIAEKHGGTARPVISGEPFLTEPGAFSSMIAAAVKAETAIDPEPSTTGGTSDARFLRSVCPVIEFGLCNATMHKRDEAVAMADLDTLSRIYARVAQAALSS.

His77 lines the Zn(2+) pocket. Residue Asp79 is part of the active site. Zn(2+) is bound at residue Asp108. The active-site Proton acceptor is Glu138. Glu139, Glu167, and His350 together coordinate Zn(2+).

Belongs to the peptidase M20A family. DapE subfamily. Homodimer. It depends on Zn(2+) as a cofactor. Co(2+) is required as a cofactor.

The catalysed reaction is N-succinyl-(2S,6S)-2,6-diaminopimelate + H2O = (2S,6S)-2,6-diaminopimelate + succinate. It participates in amino-acid biosynthesis; L-lysine biosynthesis via DAP pathway; LL-2,6-diaminopimelate from (S)-tetrahydrodipicolinate (succinylase route): step 3/3. Its function is as follows. Catalyzes the hydrolysis of N-succinyl-L,L-diaminopimelic acid (SDAP), forming succinate and LL-2,6-diaminopimelate (DAP), an intermediate involved in the bacterial biosynthesis of lysine and meso-diaminopimelic acid, an essential component of bacterial cell walls. The protein is Succinyl-diaminopimelate desuccinylase of Erythrobacter litoralis (strain HTCC2594).